We begin with the raw amino-acid sequence, 156 residues long: Ribonuclease H (156 aa).

One can recognise an RNase H type-1 domain in the interval 3–144 (ELKLIHIFTD…CDVLARTAAE (142 aa)). Positions 12, 50, 72, and 136 each coordinate Mg(2+).

Belongs to the RNase H family. Monomer. It depends on Mg(2+) as a cofactor.

It is found in the cytoplasm. The catalysed reaction is Endonucleolytic cleavage to 5'-phosphomonoester.. Endonuclease that specifically degrades the RNA of RNA-DNA hybrids. The chain is Ribonuclease H from Shewanella baltica (strain OS223).